Reading from the N-terminus, the 726-residue chain is Elongation factor 2 (726 aa).

The 242-residue stretch at 19–260 (DRIRNIGICA…MVIKHLPSPP (242 aa)) folds into the tr-type G domain. Residues 28-35 (AHIDHGKT), 94-98 (DTPGH), and 148-151 (NKVD) contribute to the GTP site. Position 602 is a diphthamide (histidine 602).

It belongs to the TRAFAC class translation factor GTPase superfamily. Classic translation factor GTPase family. EF-G/EF-2 subfamily.

The protein localises to the cytoplasm. Catalyzes the GTP-dependent ribosomal translocation step during translation elongation. During this step, the ribosome changes from the pre-translocational (PRE) to the post-translocational (POST) state as the newly formed A-site-bound peptidyl-tRNA and P-site-bound deacylated tRNA move to the P and E sites, respectively. Catalyzes the coordinated movement of the two tRNA molecules, the mRNA and conformational changes in the ribosome. The polypeptide is Elongation factor 2 (fusA) (Methanocaldococcus jannaschii (strain ATCC 43067 / DSM 2661 / JAL-1 / JCM 10045 / NBRC 100440) (Methanococcus jannaschii)).